The chain runs to 678 residues: Dol-P-Man:Man(7)GlcNAc(2)-PP-Dol alpha-1,6-mannosyltransferase (678 aa).

Helical transmembrane passes span Met1–Val21, Phe56–Leu76, Phe81–Ser101, Ile109–Met129, Thr133–Leu153, Ile168–Leu188, Val200–Trp220, Phe252–Ala272, Pro279–Leu299, Phe301–Trp321, and Ala334–Ile354.

Belongs to the glycosyltransferase 22 family.

The protein resides in the endoplasmic reticulum membrane. It carries out the reaction an alpha-D-Man-(1-&gt;2)-alpha-D-Man-(1-&gt;2)-alpha-D-Man-(1-&gt;3)-[alpha-D-Man-(1-&gt;2)-alpha-D-Man-(1-&gt;3)-alpha-D-Man-(1-&gt;6)]-beta-D-Man-(1-&gt;4)-beta-D-GlcNAc-(1-&gt;4)-alpha-D-GlcNAc-diphospho-di-trans,poly-cis-dolichol + a di-trans,poly-cis-dolichyl beta-D-mannosyl phosphate = an alpha-D-Man-(1-&gt;2)-alpha-D-Man-(1-&gt;2)-alpha-D-Man-(1-&gt;3)-[alpha-D-Man-(1-&gt;2)-alpha-D-Man-(1-&gt;3)-[alpha-D-Man-(1-&gt;6)]-alpha-D-Man-(1-&gt;6)]-beta-D-Man-(1-&gt;4)-beta-D-GlcNAc-(1-&gt;4)-alpha-D-GlcNAc-diphospho-di-trans,poly-cis-dolichol + a di-trans,poly-cis-dolichyl phosphate + H(+). It participates in protein modification; protein glycosylation. Mannosyltransferase that operates in the biosynthetic pathway of dolichol-linked oligosaccharides, the glycan precursors employed in protein asparagine (N)-glycosylation. The assembly of dolichol-linked oligosaccharides begins on the cytosolic side of the endoplasmic reticulum membrane and finishes in its lumen. The sequential addition of sugars to dolichol pyrophosphate produces dolichol-linked oligosaccharides containing fourteen sugars, including two GlcNAcs, nine mannoses and three glucoses. Once assembled, the oligosaccharide is transferred from the lipid to nascent proteins by oligosaccharyltransferases. In the lumen of the endoplasmic reticulum, adds the eighth mannose residue in an alpha-1,6 linkage onto Man(7)GlcNAc(2)-PP-dolichol to produce Man(8)GlcNAc(2)-PP-dolichol. The sequence is that of Dol-P-Man:Man(7)GlcNAc(2)-PP-Dol alpha-1,6-mannosyltransferase from Drosophila melanogaster (Fruit fly).